Reading from the N-terminus, the 360-residue chain is Glutaminyl-peptide cyclotransferase (360 aa).

Residues 1–23 form the signal peptide; that stretch reads MKYLKILIIVTIFFFLLINVINC. Asn135 is a glycosylation site (N-linked (GlcNAc...) asparagine). Asp165 is a Zn(2+) binding site. The active-site Proton acceptor is the Glu199. Position 200 (Glu200) interacts with Zn(2+). Asp251 (proton acceptor) is an active-site residue. Zn(2+) is bound at residue His330.

This sequence belongs to the glutaminyl-peptide cyclotransferase family.

The protein resides in the secreted. It carries out the reaction N-terminal L-glutaminyl-[peptide] = N-terminal 5-oxo-L-prolyl-[peptide] + NH4(+). Its function is as follows. Responsible for the biosynthesis of pyroglutamyl peptides. Has a bias against acidic and tryptophan residues adjacent to the N-terminal glutaminyl residue and a lack of importance of chain length after the second residue. Also catalyzes N-terminal pyroglutamate formation. The sequence is that of Glutaminyl-peptide cyclotransferase (qpct) from Dictyostelium discoideum (Social amoeba).